A 119-amino-acid chain; its full sequence is Ribosome-binding factor A (119 aa).

The protein belongs to the RbfA family. In terms of assembly, monomer. Binds 30S ribosomal subunits, but not 50S ribosomal subunits or 70S ribosomes.

The protein localises to the cytoplasm. In terms of biological role, one of several proteins that assist in the late maturation steps of the functional core of the 30S ribosomal subunit. Associates with free 30S ribosomal subunits (but not with 30S subunits that are part of 70S ribosomes or polysomes). Required for efficient processing of 16S rRNA. May interact with the 5'-terminal helix region of 16S rRNA. The sequence is that of Ribosome-binding factor A from Ligilactobacillus salivarius (strain UCC118) (Lactobacillus salivarius).